Reading from the N-terminus, the 543-residue chain is Chaperonin GroEL (543 aa).

ATP-binding positions include 29-32 (TLGP), 86-90 (DGTTT), glycine 413, 476-478 (NAA), and aspartate 492.

Belongs to the chaperonin (HSP60) family. As to quaternary structure, forms a cylinder of 14 subunits composed of two heptameric rings stacked back-to-back. Interacts with the co-chaperonin GroES.

It is found in the cytoplasm. It carries out the reaction ATP + H2O + a folded polypeptide = ADP + phosphate + an unfolded polypeptide.. Its function is as follows. Together with its co-chaperonin GroES, plays an essential role in assisting protein folding. The GroEL-GroES system forms a nano-cage that allows encapsulation of the non-native substrate proteins and provides a physical environment optimized to promote and accelerate protein folding. The protein is Chaperonin GroEL of Streptococcus pyogenes serotype M5 (strain Manfredo).